The chain runs to 490 residues: MDLVTFLVLTLSSLILLSLWRQSSRRRKLPPGPTPLPIIGNFLQIDVKNISQSLTKFSKTYGPVFTLYLGSQPTVILHGYEAIKEALIDNGEKFSGRGSYPMNENVTKGFGIVFSNGNRWKEMRRFTIMNFRNLGIGKRNIEDRVQEEAQCLVEELRKTKGSPCDPSLILNCAPCNVICSITFQNHFDYKDKEMLTFMEKVNENLKIMSSPWMQVCNSFPSLIDYFPGTHHKIAKNINYMKSYLLKKIEEHQESLDVTNPRDFVDYYLIKQKQANNIEQSEYSHENLTCSIMDLIGAGTETMSTTLRYALLLLMKYPHVTAKVQEEIDRVIGRHRSPCMQDRKHMPYTDAMIHEVQRFINFVPTNLPHAVTCDIKFRNYLIPKGTKVLTSLTSVLHDSKEFPNPEMFDPGHFLDENGNFKKSDYFLPFSAGKRACVGEGLARMQLFLFLTTILQNFNLKSLVHPKDIDTMPVLNGFASLPPTYQLCFIPS.

At Arg144 the chain carries Dimethylated arginine. Cys435 lines the heme pocket.

Belongs to the cytochrome P450 family. It depends on heme as a cofactor.

The protein localises to the endoplasmic reticulum membrane. The protein resides in the microsome membrane. The enzyme catalyses an organic molecule + reduced [NADPH--hemoprotein reductase] + O2 = an alcohol + oxidized [NADPH--hemoprotein reductase] + H2O + H(+). In terms of biological role, cytochromes P450 are a group of heme-thiolate monooxygenases. In liver microsomes, this enzyme is involved in an NADPH-dependent electron transport pathway. It oxidizes a variety of structurally unrelated compounds, including steroids, fatty acids, and xenobiotics. The protein is Cytochrome P450 2C7 (Cyp2c7) of Rattus norvegicus (Rat).